A 189-amino-acid chain; its full sequence is NADH-quinone oxidoreductase subunit B (189 aa).

Residues Cys39, Cys40, Cys104, and Cys135 each coordinate [4Fe-4S] cluster.

The protein belongs to the complex I 20 kDa subunit family. In terms of assembly, NDH-1 is composed of 14 different subunits. Subunits NuoB, C, D, E, F, and G constitute the peripheral sector of the complex. [4Fe-4S] cluster serves as cofactor.

It localises to the cell inner membrane. It catalyses the reaction a quinone + NADH + 5 H(+)(in) = a quinol + NAD(+) + 4 H(+)(out). Its function is as follows. NDH-1 shuttles electrons from NADH, via FMN and iron-sulfur (Fe-S) centers, to quinones in the respiratory chain. The immediate electron acceptor for the enzyme in this species is believed to be a menaquinone. Couples the redox reaction to proton translocation (for every two electrons transferred, four hydrogen ions are translocated across the cytoplasmic membrane), and thus conserves the redox energy in a proton gradient. The sequence is that of NADH-quinone oxidoreductase subunit B from Chlorobaculum parvum (strain DSM 263 / NCIMB 8327) (Chlorobium vibrioforme subsp. thiosulfatophilum).